Consider the following 388-residue polypeptide: Galactokinase (388 aa).

33–36 (EHTD) contributes to the substrate binding site. ATP-binding positions include Ser-67 and 124–130 (GSGLSSS). Mg(2+) is bound by residues Ser-130 and Glu-162. Residue Asp-174 is the Proton acceptor of the active site. Residue Tyr-224 coordinates substrate.

The protein belongs to the GHMP kinase family. GalK subfamily.

It is found in the cytoplasm. The enzyme catalyses alpha-D-galactose + ATP = alpha-D-galactose 1-phosphate + ADP + H(+). It participates in carbohydrate metabolism; galactose metabolism. Functionally, catalyzes the transfer of the gamma-phosphate of ATP to D-galactose to form alpha-D-galactose-1-phosphate (Gal-1-P). The sequence is that of Galactokinase from Streptococcus thermophilus (strain ATCC BAA-491 / LMD-9).